Reading from the N-terminus, the 200-residue chain is Small ribosomal subunit protein uS4 (200 aa).

The interval 22–41 (TGKELQKRPYAPGQHGPNQR) is disordered. One can recognise an S4 RNA-binding domain in the interval 92-152 (SRLDNLVYRM…EKSRNLQVIK (61 aa)).

Belongs to the universal ribosomal protein uS4 family. Part of the 30S ribosomal subunit. Contacts protein S5. The interaction surface between S4 and S5 is involved in control of translational fidelity.

One of the primary rRNA binding proteins, it binds directly to 16S rRNA where it nucleates assembly of the body of the 30S subunit. In terms of biological role, with S5 and S12 plays an important role in translational accuracy. The protein is Small ribosomal subunit protein uS4 of Halalkalibacterium halodurans (strain ATCC BAA-125 / DSM 18197 / FERM 7344 / JCM 9153 / C-125) (Bacillus halodurans).